Reading from the N-terminus, the 220-residue chain is Cell division protein DedD (220 aa).

A helical membrane pass occupies residues Leu-9 to Gly-29. 2 disordered regions span residues Lys-46–Ser-84 and Phe-97–Ala-137. Positions Pro-57–Gly-70 are enriched in low complexity. Over residues Glu-100–Pro-109 the composition is skewed to pro residues. Basic and acidic residues-rich tracts occupy residues Lys-110–Val-119 and Pro-127–Ala-137. One can recognise an SPOR domain in the interval Ala-138–Tyr-217.

Belongs to the DedD family.

It is found in the cell inner membrane. Its function is as follows. Non-essential cell division protein that could be required for efficient cell constriction. This Escherichia coli (strain K12) protein is Cell division protein DedD.